Here is a 250-residue protein sequence, read N- to C-terminus: Probable transcriptional regulatory protein DIP1378 (250 aa).

The tract at residues 1 to 22 (MSGHSKWATTKHKKAANDAKRG) is disordered.

This sequence belongs to the TACO1 family.

Its subcellular location is the cytoplasm. In Corynebacterium diphtheriae (strain ATCC 700971 / NCTC 13129 / Biotype gravis), this protein is Probable transcriptional regulatory protein DIP1378.